A 321-amino-acid chain; its full sequence is Ferredoxin--NADP reductase (321 aa).

FAD contacts are provided by D28, Q36, Y41, A81, F115, D274, and S315.

The protein belongs to the ferredoxin--NADP reductase type 2 family. Homodimer. It depends on FAD as a cofactor.

It catalyses the reaction 2 reduced [2Fe-2S]-[ferredoxin] + NADP(+) + H(+) = 2 oxidized [2Fe-2S]-[ferredoxin] + NADPH. This is Ferredoxin--NADP reductase from Frankia casuarinae (strain DSM 45818 / CECT 9043 / HFP020203 / CcI3).